Reading from the N-terminus, the 152-residue chain is Transcriptional regulator MraZ (152 aa).

SpoVT-AbrB domains are found at residues 5-52 (ASAI…PIHE) and 81-124 (AHEV…DEQS).

It belongs to the MraZ family. As to quaternary structure, forms oligomers.

The protein resides in the cytoplasm. It localises to the nucleoid. This is Transcriptional regulator MraZ from Shewanella baltica (strain OS195).